Reading from the N-terminus, the 252-residue chain is Putative pinene synthase (252 aa).

The protein belongs to the terpene synthase family. Tpsa subfamily.

This Fragaria ananassa (Strawberry) protein is Putative pinene synthase.